A 49-amino-acid polypeptide reads, in one-letter code: Large ribosomal subunit protein bL33A (49 aa).

It belongs to the bacterial ribosomal protein bL33 family.

This Leuconostoc mesenteroides subsp. mesenteroides (strain ATCC 8293 / DSM 20343 / BCRC 11652 / CCM 1803 / JCM 6124 / NCDO 523 / NBRC 100496 / NCIMB 8023 / NCTC 12954 / NRRL B-1118 / 37Y) protein is Large ribosomal subunit protein bL33A.